Consider the following 445-residue polypeptide: Anaerobilin synthase (445 aa).

A Radical SAM core domain is found at 52–287 (TASPRKRLVY…LQGCDFMDDA (236 aa)). Tyr-61 serves as a coordination point for S-adenosyl-L-methionine. 2 residues coordinate [4Fe-4S] cluster: Cys-67 and Cys-71. An S-adenosyl-L-methionine-binding site is contributed by Phe-73. Residue Cys-74 coordinates [4Fe-4S] cluster. S-adenosyl-L-methionine contacts are provided by residues Gly-118, 119-120 (GT), Glu-151, Gln-178, Arg-190, and Asp-215.

Belongs to the anaerobic coproporphyrinogen-III oxidase family. ChuW/HutW subfamily. The cofactor is [4Fe-4S] cluster.

The enzyme catalyses 2 reduced [flavodoxin] + heme b + 2 S-adenosyl-L-methionine = anaerobilin + 2 oxidized [flavodoxin] + Fe(2+) + 5'-deoxyadenosine + L-methionine + S-adenosyl-L-homocysteine. Its activity is regulated as follows. Inhibited by exposure to molecular oxygen. Its function is as follows. Involved in heme degradation and iron utilization under anaerobic conditions. Catalyzes a radical-mediated mechanism facilitating iron liberation and the production of the tetrapyrrole product anaerobilin. Can use heme, mesoheme and deuteroheme as substrates. In Escherichia coli O157:H7, this protein is Anaerobilin synthase.